Here is a 434-residue protein sequence, read N- to C-terminus: Enolase (434 aa).

Substrate-binding residues include His158 and Glu167. Glu210 (proton donor) is an active-site residue. 3 residues coordinate Mg(2+): Asp245, Glu294, and Asp319. Residues Glu294 and Asp319 each contribute to the substrate site. Lys344 acts as the Proton acceptor in catalysis. Residues 371–374 and Lys395 contribute to the substrate site; that span reads SHRS.

This sequence belongs to the enolase family. As to quaternary structure, homodimer. Mg(2+) serves as cofactor.

Its subcellular location is the cytoplasm. The enzyme catalyses (2R)-2-phosphoglycerate = phosphoenolpyruvate + H2O. It participates in carbohydrate degradation; glycolysis; pyruvate from D-glyceraldehyde 3-phosphate: step 4/5. The chain is Enolase (ENO) from Schistosoma japonicum (Blood fluke).